We begin with the raw amino-acid sequence, 189 residues long: Copper transport protein CTR2 (189 aa).

The Cytoplasmic segment spans residues 1–81 (MDDKKTWSTV…VVFEWWHIKT (81 aa)). The chain crosses the membrane as a helical span at residues 82–102 (LPGLILSCLAIFGLAYLYEYL). Residues 103–142 (KYCVHKRQLSQRVLLPNRSLTKINQADKVSNSILYGLQVG) are Vacuolar-facing. Residues 143–163 (FSFMLMLVFMTYNGWLMLAVV) form a helical membrane-spanning segment. The Cytoplasmic segment spans residues 164-189 (CGAIWGNYSWCTSYSPEIDDSSLACH).

Belongs to the copper transporter (Ctr) (TC 1.A.56) family. SLC31A subfamily. In terms of assembly, homomultimer.

Its subcellular location is the vacuole membrane. Its function is as follows. Provides bioavailable copper via mobilization of vacuolar copper stores and export to the cytoplasm. This is Copper transport protein CTR2 (CTR2) from Saccharomyces cerevisiae (strain ATCC 204508 / S288c) (Baker's yeast).